Reading from the N-terminus, the 490-residue chain is Cytochrome P450 90D2 (490 aa).

Residues 4-24 (AAAGWAAPAFAVAAVVIWVVL) form a helical membrane-spanning segment. Cys437 contacts heme.

The protein belongs to the cytochrome P450 family. Heme is required as a cofactor. In terms of tissue distribution, expressed at low levels leaf blades, shoot apex and elongating stem.

The protein localises to the membrane. It catalyses the reaction 6-deoxoteasterone + reduced [NADPH--hemoprotein reductase] + O2 = 3-dehydro-6-deoxoteasterone + oxidized [NADPH--hemoprotein reductase] + 2 H2O + H(+). The protein operates within plant hormone biosynthesis; brassinosteroid biosynthesis. In terms of biological role, catalyzes the C6-oxidation step in brassinosteroids biosynthesis. May convert 6-deoxoteasterone (6-deoxoTE) to 3-dehydro-6-deoxoteasterone (6-deoxo3DT, 6-deoxo3DHT), and teasterone (TE) to 3-dehydroteasterone (3DT, 3-DHT). Involved in the elongation of leaf sheaths and stems. This Oryza sativa subsp. japonica (Rice) protein is Cytochrome P450 90D2.